The primary structure comprises 572 residues: Flagellin A (572 aa).

This sequence belongs to the bacterial flagellin family. Heteromer of FlaA and FlaB. Interacts with FliW.

The protein localises to the secreted. It is found in the bacterial flagellum. In terms of biological role, flagellin is the subunit protein which polymerizes to form the filaments of bacterial flagella. FlaA binds to flagellar assembly factor FliW protein, preventing FliW from binding to CsrA, so that CsrA can then bind flaA mRNA and represses its translation. The protein is Flagellin A (flaA) of Campylobacter jejuni subsp. jejuni serotype O:2 (strain ATCC 700819 / NCTC 11168).